Here is a 730-residue protein sequence, read N- to C-terminus: Dynein axonemal intermediate chain 7 (730 aa).

Residues 1-14 (MAPKSKKAPSKKKM) are compositionally biased toward basic residues. Residues 1-20 (MAPKSKKAPSKKKMTKAERL) are disordered.

The protein belongs to the DNAI7 family. Part of the multisubunit axonemal dynein complex formed at least of two heavy chains and a number of intermediate and light chains. Interacts with tubulin. Associates with microtubule. Post-translationally, ubiquitinated. Ubiquitination leads to its degradation through the 26S proteasome. Ubiquitin-proteasome-mediated DNAI7 degradation occurs in mitosis. High expressed in lung, kidney, and testis.

The protein resides in the cell projection. The protein localises to the cilium. Its subcellular location is the cytoplasm. Its function is as follows. Via its association with the multisubunit axonemal dynein complex, is potentially involved in the regulation of cilia function. May also act as a cell cycle regulator. The polypeptide is Dynein axonemal intermediate chain 7 (Dnai7) (Mus musculus (Mouse)).